Reading from the N-terminus, the 365-residue chain is UDP-N-acetylglucosamine--N-acetylmuramyl-(pentapeptide) pyrophosphoryl-undecaprenol N-acetylglucosamine transferase (365 aa).

UDP-N-acetyl-alpha-D-glucosamine-binding positions include 20–22 (TGG), Asn132, Arg168, Ser196, Ile253, and Gln298.

It belongs to the glycosyltransferase 28 family. MurG subfamily.

The protein resides in the cell inner membrane. The enzyme catalyses di-trans,octa-cis-undecaprenyl diphospho-N-acetyl-alpha-D-muramoyl-L-alanyl-D-glutamyl-meso-2,6-diaminopimeloyl-D-alanyl-D-alanine + UDP-N-acetyl-alpha-D-glucosamine = di-trans,octa-cis-undecaprenyl diphospho-[N-acetyl-alpha-D-glucosaminyl-(1-&gt;4)]-N-acetyl-alpha-D-muramoyl-L-alanyl-D-glutamyl-meso-2,6-diaminopimeloyl-D-alanyl-D-alanine + UDP + H(+). The protein operates within cell wall biogenesis; peptidoglycan biosynthesis. Functionally, cell wall formation. Catalyzes the transfer of a GlcNAc subunit on undecaprenyl-pyrophosphoryl-MurNAc-pentapeptide (lipid intermediate I) to form undecaprenyl-pyrophosphoryl-MurNAc-(pentapeptide)GlcNAc (lipid intermediate II). The polypeptide is UDP-N-acetylglucosamine--N-acetylmuramyl-(pentapeptide) pyrophosphoryl-undecaprenol N-acetylglucosamine transferase (Ralstonia nicotianae (strain ATCC BAA-1114 / GMI1000) (Ralstonia solanacearum)).